Here is a 548-residue protein sequence, read N- to C-terminus: Chaperonin GroEL (548 aa).

ATP-binding positions include 30-33, K51, 87-91, G415, and D495; these read TLGP and DGTTT.

The protein belongs to the chaperonin (HSP60) family. As to quaternary structure, forms a cylinder of 14 subunits composed of two heptameric rings stacked back-to-back. Interacts with the co-chaperonin GroES.

The protein localises to the cytoplasm. The catalysed reaction is ATP + H2O + a folded polypeptide = ADP + phosphate + an unfolded polypeptide.. Its function is as follows. Together with its co-chaperonin GroES, plays an essential role in assisting protein folding. The GroEL-GroES system forms a nano-cage that allows encapsulation of the non-native substrate proteins and provides a physical environment optimized to promote and accelerate protein folding. The polypeptide is Chaperonin GroEL (Pseudoalteromonas atlantica (strain T6c / ATCC BAA-1087)).